We begin with the raw amino-acid sequence, 767 residues long: E3 ubiquitin-protein ligase pub1 (767 aa).

The C2 domain maps to 1–111 (MSNSAQSRRI…AIGGDEMLTR (111 aa)). The segment covering 138–158 (LQVPSSAASGARTQRTSITND) has biased composition (polar residues). Disordered stretches follow at residues 138 to 216 (LQVP…RRTD) and 252 to 306 (SASS…RPYF). At Thr156 the chain carries Phosphothreonine. A compositionally biased stretch (low complexity) spans 159-176 (PQSSQSSSVSRNPASSRA). Ser178 is subject to Phosphoserine. Position 180 is a phosphothreonine (Thr180). The span at 184–194 (APAASPASSEP) shows a compositional bias: low complexity. In terms of domain architecture, WW 1 spans 211-236 (WERRTDNLGRTYYVDHNTRSTTWIRP). Residues 257–286 (NVTEGVQPSSSNAARRTEASVLTSNATTAG) show a composition bias toward polar residues. 2 WW domains span residues 294–319 (WEQR…WVDP) and 351–376 (WEMR…WDDP). The region spanning 463 to 767 (FLLSHEMFNP…VEETIGFGQE (305 aa)) is the HECT domain. Cys735 (glycyl thioester intermediate) is an active-site residue.

It localises to the membrane. Its subcellular location is the cytoplasm. It catalyses the reaction S-ubiquitinyl-[E2 ubiquitin-conjugating enzyme]-L-cysteine + [acceptor protein]-L-lysine = [E2 ubiquitin-conjugating enzyme]-L-cysteine + N(6)-ubiquitinyl-[acceptor protein]-L-lysine.. It participates in protein modification; protein ubiquitination. E3 ubiquitin-protein ligase which accepts ubiquitin from an E2 ubiquitin-conjugating enzyme in the form of a thioester and then directly transfers the ubiquitin to targeted substrates. Regulates ubiquitination of cdc25. In Schizosaccharomyces pombe (strain 972 / ATCC 24843) (Fission yeast), this protein is E3 ubiquitin-protein ligase pub1 (pub1).